A 134-amino-acid chain; its full sequence is GSH-induced LITAF domain protein (134 aa).

Positions 33 to 113 (DPLGAPIQQT…CGNKVADFEK (81 aa)) constitute an LITAF domain. Zn(2+) is bound by residues Cys-53 and Cys-56. A membrane-binding amphipathic helix region spans residues 68 to 88 (PGVAAVVACMMPFMLGFCFLC). Residues Cys-101 and Cys-104 each contribute to the Zn(2+) site.

The protein belongs to the CDIP1/LITAF family. As to quaternary structure, interacts (via N- and C-terminal) with MIEL1 and LSD1 (via N-terminus).

The protein localises to the cell membrane. Its function is as follows. Acts as a membrane anchor, bringing other regulators of programmed cell death (PCD) to the plasma membrane. Negatively regulates hypersensitive cell death. This Arabidopsis thaliana (Mouse-ear cress) protein is GSH-induced LITAF domain protein.